Reading from the N-terminus, the 305-residue chain is tRNA pseudouridine synthase B (305 aa).

Asp-41 acts as the Nucleophile in catalysis.

It belongs to the pseudouridine synthase TruB family. Type 1 subfamily.

The enzyme catalyses uridine(55) in tRNA = pseudouridine(55) in tRNA. In terms of biological role, responsible for synthesis of pseudouridine from uracil-55 in the psi GC loop of transfer RNAs. In Prochlorococcus marinus (strain MIT 9301), this protein is tRNA pseudouridine synthase B.